Reading from the N-terminus, the 147-residue chain is Hemoglobin subunit gamma (147 aa).

Residues 3–147 (DFTAEEKAAI…VASAVARKYH (145 aa)) form the Globin domain. Residues His64 and His93 each coordinate heme b.

It belongs to the globin family. As to quaternary structure, heterotetramer of two alpha chains and two gamma chains in fetal hemoglobin (Hb F). Red blood cells.

Gamma chains make up the fetal hemoglobin F, in combination with alpha chains. The sequence is that of Hemoglobin subunit gamma (HBG) from Trichechus manatus (Caribbean manatee).